The following is a 379-amino-acid chain: Nitric oxide reductase FlRd-NAD(+) reductase (379 aa).

It belongs to the FAD-dependent oxidoreductase family. FAD serves as cofactor.

The protein localises to the cytoplasm. The enzyme catalyses 2 reduced [nitric oxide reductase rubredoxin domain] + NAD(+) + H(+) = 2 oxidized [nitric oxide reductase rubredoxin domain] + NADH. It functions in the pathway nitrogen metabolism; nitric oxide reduction. Its function is as follows. One of at least two accessory proteins for anaerobic nitric oxide (NO) reductase. Reduces the rubredoxin moiety of NO reductase. The polypeptide is Nitric oxide reductase FlRd-NAD(+) reductase (Pectobacterium atrosepticum (strain SCRI 1043 / ATCC BAA-672) (Erwinia carotovora subsp. atroseptica)).